The chain runs to 772 residues: Mitochondrial intermediate peptidase (772 aa).

A mitochondrion-targeting transit peptide spans 1–37 (MLRTIILKAGSNASIPSPSRQNKLLRFFATAGAVSRT). A Zn(2+)-binding site is contributed by His-558. The active site involves Glu-559. Zn(2+) is bound by residues His-562 and Glu-587.

This sequence belongs to the peptidase M3 family. It depends on Zn(2+) as a cofactor.

The protein localises to the mitochondrion matrix. The enzyme catalyses Release of an N-terminal octapeptide as second stage of processing of some proteins imported into the mitochondrion.. Stimulated by Fe(2+). In terms of biological role, cleaves proteins, imported into the mitochondrion, to their mature size. While most mitochondrial precursor proteins are processed to the mature form in one step by mitochondrial processing peptidase (MPP), the sequential cleavage by MIP of an octapeptide after initial processing by MPP is a required step for a subgroup of nuclear-encoded precursor proteins destined for the matrix or the inner membrane. Cleaves precursor proteins of respiratory components, including subunits of the electron transport chain and tricarboxylic acid cycle enzymes, and components of the mitochondrial genetic machinery, including ribosomal proteins, translation factors, and proteins required for mitochondrial DNA metabolism. The sequence is that of Mitochondrial intermediate peptidase (OCT1) from Saccharomyces cerevisiae (strain ATCC 204508 / S288c) (Baker's yeast).